Here is a 583-residue protein sequence, read N- to C-terminus: Putative ABC transporter ATP-binding protein exp8 (583 aa).

The 284-residue stretch at 25 to 308 folds into the ABC transmembrane type-1 domain; sequence TFLALSFLLA…VTQNFSTLQT (284 aa). 5 consecutive transmembrane segments (helical) span residues 26–46, 61–81, 135–155, 159–179, and 259–279; these read FLAL…PLVA, AVTV…VQYV, MFSG…TTLY, VLDF…FLLV, and LGYA…GITV. The region spanning 341–574 is the ABC transporter domain; that stretch reads IRFEHVCFSY…GGTYHKMYSL (234 aa). Residue 374–381 participates in ATP binding; it reads GHTGSGKS.

This sequence belongs to the ABC transporter superfamily.

The protein localises to the cell membrane. The protein is Putative ABC transporter ATP-binding protein exp8 (exp8) of Streptococcus pneumoniae serotype 4 (strain ATCC BAA-334 / TIGR4).